The following is a 957-amino-acid chain: Glycine dehydrogenase (decarboxylating) (957 aa).

N6-(pyridoxal phosphate)lysine is present on Lys704.

Belongs to the GcvP family. The glycine cleavage system is composed of four proteins: P, T, L and H. Pyridoxal 5'-phosphate serves as cofactor.

It catalyses the reaction N(6)-[(R)-lipoyl]-L-lysyl-[glycine-cleavage complex H protein] + glycine + H(+) = N(6)-[(R)-S(8)-aminomethyldihydrolipoyl]-L-lysyl-[glycine-cleavage complex H protein] + CO2. The glycine cleavage system catalyzes the degradation of glycine. The P protein binds the alpha-amino group of glycine through its pyridoxal phosphate cofactor; CO(2) is released and the remaining methylamine moiety is then transferred to the lipoamide cofactor of the H protein. The chain is Glycine dehydrogenase (decarboxylating) from Bordetella petrii (strain ATCC BAA-461 / DSM 12804 / CCUG 43448).